The chain runs to 278 residues: WIMGHMVNAVKQIPTSLDLGANALEMDVTFKNEEPTYTYHGVPCDAFRDCIRWEYFNVFAKTLREYTTPGFDKYREQLILLVFDLKTGDMNNAQARTAGVNTAKQLLQYYWNNDNNGGRAYVVLSIPDIAQHELIKGFKETLKKEGHENLLDKVGYDFSGPYLPRLPTLDETHEAFKKAGVEGHVWLSDGLTNFSPLGDMARLKEAIKSRDSANGFINKIYYWSVDKVSTVEKALKVGVDGIMTNHPDVIIGVLNENGFKDKYRLATYDDNPWETFGK.

H5 is an active-site residue. Mg(2+)-binding residues include E25 and D27. Residue H40 is the Nucleophile of the active site. C44 and C50 form a disulfide bridge. D84 serves as a coordination point for Mg(2+).

The protein belongs to the arthropod phospholipase D family. Class I subfamily. Mg(2+) serves as cofactor. In terms of tissue distribution, expressed by the venom gland.

It is found in the secreted. It catalyses the reaction an N-(acyl)-sphingosylphosphocholine = an N-(acyl)-sphingosyl-1,3-cyclic phosphate + choline. The catalysed reaction is an N-(acyl)-sphingosylphosphoethanolamine = an N-(acyl)-sphingosyl-1,3-cyclic phosphate + ethanolamine. It carries out the reaction a 1-acyl-sn-glycero-3-phosphocholine = a 1-acyl-sn-glycero-2,3-cyclic phosphate + choline. The enzyme catalyses a 1-acyl-sn-glycero-3-phosphoethanolamine = a 1-acyl-sn-glycero-2,3-cyclic phosphate + ethanolamine. In terms of biological role, dermonecrotic toxins cleave the phosphodiester linkage between the phosphate and headgroup of certain phospholipids (sphingolipid and lysolipid substrates), forming an alcohol (often choline) and a cyclic phosphate. This toxin acts on sphingomyelin (SM). It may also act on ceramide phosphoethanolamine (CPE), lysophosphatidylcholine (LPC) and lysophosphatidylethanolamine (LPE), but not on lysophosphatidylserine (LPS), and lysophosphatidylglycerol (LPG). It acts by transphosphatidylation, releasing exclusively cyclic phosphate products as second products. Induces dermonecrosis, hemolysis, increased vascular permeability, edema, inflammatory response, and platelet aggregation. This chain is Dermonecrotic toxin Ls4SicTox-alphaIII1ii, found in Loxosceles sp. (strain 4 GJB-2008) (Recluse spider).